The chain runs to 319 residues: Lambda-crystallin homolog (319 aa).

Ala2 carries the N-acetylalanine modification. Ser3 is subject to Phosphoserine. NAD(+) is bound by residues 16–17 (LI), Asp36, Glu97, and Lys102.

It belongs to the 3-hydroxyacyl-CoA dehydrogenase family. In terms of assembly, homodimer.

The protein localises to the cytoplasm. The catalysed reaction is L-gulonate + NAD(+) = 3-dehydro-L-gulonate + NADH + H(+). Its activity is regulated as follows. Inhibited by malonate. Functionally, has high L-gulonate 3-dehydrogenase activity. It also exhibits low dehydrogenase activity toward L-3-hydroxybutyrate (HBA) and L-threonate. This Rattus norvegicus (Rat) protein is Lambda-crystallin homolog (Cryl1).